A 243-amino-acid chain; its full sequence is Ribosomal RNA small subunit methyltransferase G (243 aa).

Residues Gly79, Phe84, Ala130–Glu131, and Arg150 contribute to the S-adenosyl-L-methionine site. The interval Lys222–Ala243 is disordered.

The protein belongs to the methyltransferase superfamily. RNA methyltransferase RsmG family.

Its subcellular location is the cytoplasm. Functionally, specifically methylates the N7 position of a guanine in 16S rRNA. The polypeptide is Ribosomal RNA small subunit methyltransferase G (Lacticaseibacillus paracasei (strain ATCC 334 / BCRC 17002 / CCUG 31169 / CIP 107868 / KCTC 3260 / NRRL B-441) (Lactobacillus paracasei)).